A 235-amino-acid chain; its full sequence is Exotoxin type C (235 aa).

The signal sequence occupies residues 1-27 (MKKINIIKIVFIITVILISTISPIIKS). Residues histidine 194, histidine 228, and aspartate 230 each coordinate Zn(2+).

Belongs to the staphylococcal/streptococcal toxin family.

Its function is as follows. Superantigen that acts as a causative agent of the symptoms associated with scarlet fever. Has been associated with streptococcal toxic shock-like disease and may play a role in the early events of rheumatic fever. Superantigens cross-link major histocompatibility complex (MHC) class II and T-cell receptor (TCR) molecules, resulting in an overstimulation of T-cells associated with a massive release of pyrogenic and inflammatory cytokines. This chain is Exotoxin type C, found in Streptococcus pyogenes serotype M18 (strain MGAS8232).